A 147-amino-acid polypeptide reads, in one-letter code: Allograft inflammatory factor 1 (147 aa).

Residue Ser2 is modified to N-acetylserine. Lys11 bears the N6-acetyllysine mark. Ser39 is modified (phosphoserine). In terms of domain architecture, EF-hand 1 spans 45-80 (SKLEAFKKKYMEFDLNEDGGIDIMSLKRMMEKLGVP). Asp58, Asn60, and Asp62 together coordinate Ca(2+). The 35-residue stretch at 81-115 (KTHLELKKLIMEVSSGPGETFSYSDFLKMMLGKRS) folds into the EF-hand 2; degenerate domain. A disordered region spans residues 128–147 (AREQEKPTGLPAKKAISELP).

Post-translationally, phosphorylated on serine residues.

Its subcellular location is the cytoplasm. The protein localises to the cytoskeleton. The protein resides in the cell projection. It is found in the ruffle membrane. It localises to the phagocytic cup. Its function is as follows. May play a role in macrophage activation and function. The chain is Allograft inflammatory factor 1 (AIF1) from Bos taurus (Bovine).